The following is a 512-amino-acid chain: Maturase K (512 aa).

Belongs to the intron maturase 2 family. MatK subfamily.

It is found in the plastid. Its subcellular location is the chloroplast. Functionally, usually encoded in the trnK tRNA gene intron. Probably assists in splicing its own and other chloroplast group II introns. The chain is Maturase K from Lilium longiflorum (Trumpet lily).